Here is a 146-residue protein sequence, read N- to C-terminus: Lysozyme C (146 aa).

The first 16 residues, S1–L16, serve as a signal peptide directing secretion. In terms of domain architecture, C-type lysozyme spans Q17–L146. Intrachain disulfides connect C22–C144, C46–C132, C81–C97, and C93–C111. Catalysis depends on residues E51 and D69.

Belongs to the glycosyl hydrolase 22 family. In terms of tissue distribution, expressed by the skin glands.

It is found in the secreted. It catalyses the reaction Hydrolysis of (1-&gt;4)-beta-linkages between N-acetylmuramic acid and N-acetyl-D-glucosamine residues in a peptidoglycan and between N-acetyl-D-glucosamine residues in chitodextrins.. In terms of biological role, lysozymes have primarily a bacteriolytic function; those in tissues and body fluids are associated with the monocyte-macrophage system and enhance the activity of immunoagents. Has antibacterial activity against the Gram-positive bacterium S.aureus and against the Gram-negative bacterium E.coli with a MIC of 1 uM and 8 uM respectively. No antifungal activity against C.albicans. The polypeptide is Lysozyme C (Bufo gargarizans andrewsi (Andrew's toad)).